A 394-amino-acid chain; its full sequence is NAD(P)H-quinone oxidoreductase subunit H (394 aa).

Belongs to the complex I 49 kDa subunit family. NDH-1 can be composed of about 15 different subunits; different subcomplexes with different compositions have been identified which probably have different functions.

The protein localises to the cellular thylakoid membrane. It catalyses the reaction a plastoquinone + NADH + (n+1) H(+)(in) = a plastoquinol + NAD(+) + n H(+)(out). It carries out the reaction a plastoquinone + NADPH + (n+1) H(+)(in) = a plastoquinol + NADP(+) + n H(+)(out). NDH-1 shuttles electrons from an unknown electron donor, via FMN and iron-sulfur (Fe-S) centers, to quinones in the respiratory and/or the photosynthetic chain. The immediate electron acceptor for the enzyme in this species is believed to be plastoquinone. Couples the redox reaction to proton translocation, and thus conserves the redox energy in a proton gradient. Cyanobacterial NDH-1 also plays a role in inorganic carbon-concentration. This chain is NAD(P)H-quinone oxidoreductase subunit H, found in Parasynechococcus marenigrum (strain WH8102).